The sequence spans 168 residues: NAD(P)H-quinone oxidoreductase subunit J, chloroplastic (168 aa).

Belongs to the complex I 30 kDa subunit family. NDH is composed of at least 16 different subunits, 5 of which are encoded in the nucleus.

It is found in the plastid. The protein localises to the chloroplast thylakoid membrane. The catalysed reaction is a plastoquinone + NADH + (n+1) H(+)(in) = a plastoquinol + NAD(+) + n H(+)(out). It carries out the reaction a plastoquinone + NADPH + (n+1) H(+)(in) = a plastoquinol + NADP(+) + n H(+)(out). Its function is as follows. NDH shuttles electrons from NAD(P)H:plastoquinone, via FMN and iron-sulfur (Fe-S) centers, to quinones in the photosynthetic chain and possibly in a chloroplast respiratory chain. The immediate electron acceptor for the enzyme in this species is believed to be plastoquinone. Couples the redox reaction to proton translocation, and thus conserves the redox energy in a proton gradient. The chain is NAD(P)H-quinone oxidoreductase subunit J, chloroplastic from Chaetosphaeridium globosum (Charophycean green alga).